Reading from the N-terminus, the 318-residue chain is Malate dehydrogenase (318 aa).

NAD(+) contacts are provided by residues 11 to 17 (GAGGNVG) and aspartate 37. Substrate-binding residues include arginine 86 and arginine 92. NAD(+) contacts are provided by residues asparagine 99 and 122-124 (VTN). 2 residues coordinate substrate: asparagine 124 and arginine 155. The active-site Proton acceptor is histidine 179.

Belongs to the LDH/MDH superfamily. MDH type 3 family.

The enzyme catalyses (S)-malate + NAD(+) = oxaloacetate + NADH + H(+). In terms of biological role, catalyzes the reversible oxidation of malate to oxaloacetate. The protein is Malate dehydrogenase of Nitratiruptor sp. (strain SB155-2).